We begin with the raw amino-acid sequence, 359 residues long: Magnesium transporter NIPA2 (359 aa).

The Extracellular portion of the chain corresponds to methionine 1–aspartate 9. A helical membrane pass occupies residues phenylalanine 10 to leucine 30. Over lysine 31–glutamate 56 the chain is Cytoplasmic. Residues tryptophan 57 to tyrosine 77 traverse the membrane as a helical segment. Residue alanine 78 is a topological domain, extracellular. Residues phenylalanine 79–leucine 99 traverse the membrane as a helical segment. The Cytoplasmic segment spans residues serine 100–arginine 107. A helical transmembrane segment spans residues leucine 108–isoleucine 128. At histidine 129 to proline 149 the chain is on the extracellular side. A helical membrane pass occupies residues glycine 150 to glycine 170. Residues proline 171–glutamine 175 lie on the Cytoplasmic side of the membrane. A helical membrane pass occupies residues threonine 176–valine 196. The Extracellular segment spans residues lysine 197–histidine 215. Residues proline 216–leucine 236 traverse the membrane as a helical segment. Topologically, residues asparagine 237 to serine 246 are cytoplasmic. Residues isoleucine 247–leucine 267 form a helical membrane-spanning segment. Residues phenylalanine 268 to aspartate 278 lie on the Extracellular side of the membrane. The chain crosses the membrane as a helical span at residues valine 279–phenylalanine 299. The Cytoplasmic segment spans residues lysine 300–phenylalanine 359.

The protein belongs to the NIPA family. As to expression, widely expressed. Expressed at high levels in the kidney.

Its subcellular location is the cell membrane. The protein resides in the early endosome. The enzyme catalyses Mg(2+)(in) = Mg(2+)(out). Functionally, acts as a selective Mg(2+) transporter. This Mus musculus (Mouse) protein is Magnesium transporter NIPA2 (Nipa2).